The following is a 336-amino-acid chain: Glycerol-3-phosphate dehydrogenase [NAD(P)+] (336 aa).

Residues serine 16, tyrosine 17, histidine 37, and lysine 111 each contribute to the NADPH site. Positions 111, 140, and 142 each coordinate sn-glycerol 3-phosphate. Residue alanine 144 participates in NADPH binding. Sn-glycerol 3-phosphate contacts are provided by lysine 196, aspartate 249, serine 259, arginine 260, and asparagine 261. Lysine 196 serves as the catalytic Proton acceptor. An NADPH-binding site is contributed by arginine 260. Positions 284 and 286 each coordinate NADPH.

Belongs to the NAD-dependent glycerol-3-phosphate dehydrogenase family.

It localises to the cytoplasm. It carries out the reaction sn-glycerol 3-phosphate + NAD(+) = dihydroxyacetone phosphate + NADH + H(+). It catalyses the reaction sn-glycerol 3-phosphate + NADP(+) = dihydroxyacetone phosphate + NADPH + H(+). The protein operates within membrane lipid metabolism; glycerophospholipid metabolism. Functionally, catalyzes the reduction of the glycolytic intermediate dihydroxyacetone phosphate (DHAP) to sn-glycerol 3-phosphate (G3P), the key precursor for phospholipid synthesis. The protein is Glycerol-3-phosphate dehydrogenase [NAD(P)+] of Glaesserella parasuis serovar 5 (strain SH0165) (Haemophilus parasuis).